The chain runs to 111 residues: Putative membrane protein insertion efficiency factor (111 aa).

It belongs to the UPF0161 family.

It localises to the cell inner membrane. Its function is as follows. Could be involved in insertion of integral membrane proteins into the membrane. This chain is Putative membrane protein insertion efficiency factor, found in Methylobacterium nodulans (strain LMG 21967 / CNCM I-2342 / ORS 2060).